The sequence spans 504 residues: Alpha,alpha-trehalose-phosphate synthase [UDP-forming] (504 aa).

2 residues coordinate D-glucose 6-phosphate: Y97 and D151. 2 residues coordinate UDP: R287 and K292. Residues R287 and K292 each contribute to the UDP-alpha-D-glucose site. R325 lines the D-glucose 6-phosphate pocket. 386–394 contributes to the UDP-alpha-D-glucose binding site; it reads DGMNLVSYE. 390 to 394 serves as a coordination point for UDP; that stretch reads LVSYE. The segment at 482–504 is disordered; sequence AGKLPTKETPVNGETSKLETSSQ. Residues 493–504 show a composition bias toward polar residues; it reads NGETSKLETSSQ.

This sequence belongs to the glycosyltransferase 20 family.

The catalysed reaction is D-glucose 6-phosphate + UDP-alpha-D-glucose = alpha,alpha-trehalose 6-phosphate + UDP + H(+). The protein operates within carbohydrate biosynthesis. Its function is as follows. Synthase catalytic subunit of the trehalose synthase complex that catalyzes the production of trehalose from glucose-6-phosphate and UDP-alpha-D-glucose in a two step process. The sequence is that of Alpha,alpha-trehalose-phosphate synthase [UDP-forming] (tpsA) from Emericella nidulans (strain FGSC A4 / ATCC 38163 / CBS 112.46 / NRRL 194 / M139) (Aspergillus nidulans).